A 450-amino-acid polypeptide reads, in one-letter code: MASGAPQNSSQMACDGEIPGFLDTLLQDFPAPLSLESPLPWKVPGTVLGQEEVEAELTELAMGFLGSRNAPPAVAAAVTHEAISQLLQTDLSEFKRLPEQEEEEEEEEERVLTTLLDAKGLSRSFFNCLWEVCSQWQKRVPLTAQAPQRKWLVSIHAIRNTRRKMEDRHVSLPAFNHLFGLSDSVHRAYFAVFDGHGGVDAARYASVHVHTNASHQPELLTDPAAALKEAFRHTDQMFLQKAKRERLQSGTTGVCALITGAALHVAWLGDSQVILVQQGQVVKLMEPHKPERQDEKSRIEALGGFVSLMDCWRVNGTLAVSRAIGDVFQKPYVSGEADAASRELTGLEDYLLLACDGFFDVVPHHEIPGLVHGHLLRQKGSGMHVAEELVAVARDRGSHDNITVMVVFLRDPLELLEGGGQGAGGAQADVGSQDLSTGLSELEINTSQRS.

Positions 152–409 constitute a PPM-type phosphatase domain; that stretch reads LVSIHAIRNT…DNITVMVVFL (258 aa). The Mn(2+) site is built by D194, G195, D356, and D400. Residues 420–450 form a disordered region; it reads GQGAGGAQADVGSQDLSTGLSELEINTSQRS. A compositionally biased stretch (polar residues) spans 433 to 450; it reads QDLSTGLSELEINTSQRS. S450 bears the Phosphoserine mark.

Belongs to the PP2C family. Associates with FEM1B. Mg(2+) serves as cofactor. Requires Mn(2+) as cofactor.

The catalysed reaction is O-phospho-L-seryl-[protein] + H2O = L-seryl-[protein] + phosphate. It carries out the reaction O-phospho-L-threonyl-[protein] + H2O = L-threonyl-[protein] + phosphate. Dephosphorylates and concomitantly deactivates CaM-kinase II activated upon autophosphorylation, and CaM-kinases IV and I activated upon phosphorylation by CaM-kinase kinase. Promotes apoptosis. In Rattus norvegicus (Rat), this protein is Protein phosphatase 1F (Ppm1f).